The chain runs to 333 residues: DNA-directed RNA polymerase subunit alpha (333 aa).

The segment at 1–235 (MQTNLLKPKA…EQLAVFAQLE (235 aa)) is alpha N-terminal domain (alpha-NTD). The tract at residues 253 to 333 (FDPILLRPVD…NWPPQGLDKR (81 aa)) is alpha C-terminal domain (alpha-CTD).

It belongs to the RNA polymerase alpha chain family. Homodimer. The RNAP catalytic core consists of 2 alpha, 1 beta, 1 beta' and 1 omega subunit. When a sigma factor is associated with the core the holoenzyme is formed, which can initiate transcription.

The catalysed reaction is RNA(n) + a ribonucleoside 5'-triphosphate = RNA(n+1) + diphosphate. Its function is as follows. DNA-dependent RNA polymerase catalyzes the transcription of DNA into RNA using the four ribonucleoside triphosphates as substrates. The polypeptide is DNA-directed RNA polymerase subunit alpha (Methylibium petroleiphilum (strain ATCC BAA-1232 / LMG 22953 / PM1)).